Reading from the N-terminus, the 330-residue chain is Fructose-1,6-bisphosphatase class 1 (330 aa).

The Mg(2+) site is built by Glu-84, Asp-103, Leu-105, and Asp-106. Residues 106–109 (DGSS), Asn-196, and Lys-262 each bind substrate. Glu-268 is a Mg(2+) binding site.

The protein belongs to the FBPase class 1 family. In terms of assembly, homotetramer. Mg(2+) serves as cofactor.

Its subcellular location is the cytoplasm. It catalyses the reaction beta-D-fructose 1,6-bisphosphate + H2O = beta-D-fructose 6-phosphate + phosphate. Its pathway is carbohydrate biosynthesis; gluconeogenesis. The protein is Fructose-1,6-bisphosphatase class 1 of Shewanella frigidimarina (strain NCIMB 400).